The primary structure comprises 101 residues: MRLMIIFDLPVETSEERKEYRKFRKNLINEGFIMIQYSVYVRVCVNKKSAEFTEKRIESFLPSKGVVQSLILTEKQYNDMHFLLGKKIKEVRNSAERTIIL.

Position 8 (Asp-8) interacts with Mg(2+).

It belongs to the CRISPR-associated endoribonuclease Cas2 protein family. As to quaternary structure, homodimer, forms a heterotetramer with a Cas1 homodimer. Mg(2+) serves as cofactor.

In terms of biological role, CRISPR (clustered regularly interspaced short palindromic repeat), is an adaptive immune system that provides protection against mobile genetic elements (viruses, transposable elements and conjugative plasmids). CRISPR clusters contain sequences complementary to antecedent mobile elements and target invading nucleic acids. CRISPR clusters are transcribed and processed into CRISPR RNA (crRNA). Functions as a ssRNA-specific endoribonuclease. Involved in the integration of spacer DNA into the CRISPR cassette. In Ligilactobacillus salivarius (strain UCC118) (Lactobacillus salivarius), this protein is CRISPR-associated endoribonuclease Cas2.